The sequence spans 463 residues: Glutamate--tRNA ligase 1 (463 aa).

The 'HIGH' region signature appears at 11–21 (PSPTGYLHIGG). Residues 240 to 244 (KLSKR) carry the 'KMSKS' region motif. Residue Lys-243 participates in ATP binding.

The protein belongs to the class-I aminoacyl-tRNA synthetase family. Glutamate--tRNA ligase type 1 subfamily. As to quaternary structure, monomer.

The protein resides in the cytoplasm. The enzyme catalyses tRNA(Glu) + L-glutamate + ATP = L-glutamyl-tRNA(Glu) + AMP + diphosphate. Its function is as follows. Catalyzes the attachment of glutamate to tRNA(Glu) in a two-step reaction: glutamate is first activated by ATP to form Glu-AMP and then transferred to the acceptor end of tRNA(Glu). This is Glutamate--tRNA ligase 1 from Campylobacter jejuni subsp. doylei (strain ATCC BAA-1458 / RM4099 / 269.97).